The chain runs to 196 residues: Phosphoheptose isomerase (196 aa).

Positions 35–194 (LTACLRCGGK…EKELFTPSGQ (160 aa)) constitute an SIS domain. 50–52 (NGG) is a binding site for substrate. Residues H59 and E63 each coordinate Zn(2+). Substrate is bound by residues E63, 92 to 93 (ND), 118 to 120 (STS), S123, and Q170. Zn(2+)-binding residues include Q170 and H178.

It belongs to the SIS family. GmhA subfamily. In terms of assembly, homotetramer. Requires Zn(2+) as cofactor.

It is found in the cytoplasm. The enzyme catalyses 2 D-sedoheptulose 7-phosphate = D-glycero-alpha-D-manno-heptose 7-phosphate + D-glycero-beta-D-manno-heptose 7-phosphate. Its pathway is carbohydrate biosynthesis; D-glycero-D-manno-heptose 7-phosphate biosynthesis; D-glycero-alpha-D-manno-heptose 7-phosphate and D-glycero-beta-D-manno-heptose 7-phosphate from sedoheptulose 7-phosphate: step 1/1. Its function is as follows. Catalyzes the isomerization of sedoheptulose 7-phosphate in D-glycero-D-manno-heptose 7-phosphate. In Syntrophotalea carbinolica (strain DSM 2380 / NBRC 103641 / GraBd1) (Pelobacter carbinolicus), this protein is Phosphoheptose isomerase.